A 717-amino-acid chain; its full sequence is Glycine--tRNA ligase beta subunit (717 aa).

It belongs to the class-II aminoacyl-tRNA synthetase family. Tetramer of two alpha and two beta subunits.

The protein resides in the cytoplasm. The catalysed reaction is tRNA(Gly) + glycine + ATP = glycyl-tRNA(Gly) + AMP + diphosphate. This chain is Glycine--tRNA ligase beta subunit, found in Gloeothece citriformis (strain PCC 7424) (Cyanothece sp. (strain PCC 7424)).